Here is a 1099-residue protein sequence, read N- to C-terminus: ATP-dependent helicase/deoxyribonuclease subunit B (1099 aa).

[4Fe-4S] cluster contacts are provided by cysteine 766, cysteine 1056, cysteine 1059, and cysteine 1065.

Belongs to the helicase family. AddB/RexB type 2 subfamily. As to quaternary structure, heterodimer of AddA and RexB. Mg(2+) serves as cofactor. The cofactor is [4Fe-4S] cluster.

The heterodimer acts as both an ATP-dependent DNA helicase and an ATP-dependent, dual-direction single-stranded exonuclease. Recognizes the chi site generating a DNA molecule suitable for the initiation of homologous recombination. This subunit has 5' -&gt; 3' nuclease activity but not helicase activity. The sequence is that of ATP-dependent helicase/deoxyribonuclease subunit B from Lactococcus lactis subsp. cremoris (strain SK11).